The chain runs to 185 residues: Orotate phosphoribosyltransferase (185 aa).

5-phospho-alpha-D-ribose 1-diphosphate-binding positions include arginine 98, lysine 99, lysine 102, histidine 104, and 128 to 136; that span reads EDVTTTGGS. Positions 132 and 160 each coordinate orotate.

Belongs to the purine/pyrimidine phosphoribosyltransferase family. PyrE subfamily. As to quaternary structure, homodimer. Requires Mg(2+) as cofactor.

The enzyme catalyses orotidine 5'-phosphate + diphosphate = orotate + 5-phospho-alpha-D-ribose 1-diphosphate. It participates in pyrimidine metabolism; UMP biosynthesis via de novo pathway; UMP from orotate: step 1/2. In terms of biological role, catalyzes the transfer of a ribosyl phosphate group from 5-phosphoribose 1-diphosphate to orotate, leading to the formation of orotidine monophosphate (OMP). The polypeptide is Orotate phosphoribosyltransferase (Bradyrhizobium sp. (strain ORS 278)).